A 119-amino-acid polypeptide reads, in one-letter code: Small ribosomal subunit protein bS16 (119 aa).

The protein belongs to the bacterial ribosomal protein bS16 family.

The polypeptide is Small ribosomal subunit protein bS16 (Chlamydia abortus (strain DSM 27085 / S26/3) (Chlamydophila abortus)).